The sequence spans 221 residues: GTP-binding nuclear protein Ran-2 (221 aa).

One can recognise a Small GTPase Ran-type domain in the interval 10–174; it reads DYPSFKLVIV…LYLARKLAGD (165 aa). 21–28 is a GTP binding site; it reads DGGTGKTT. Residues 40 to 48 are switch-I; it reads KKYEPTIGV. Residues Gly-71, 125 to 128, and 153 to 155 contribute to the GTP site; these read NKVD and SAK. The interval 71-87 is switch-II; that stretch reads GQEKFGGLRDGYYIHGQ.

The protein belongs to the small GTPase superfamily. Ran family. Found in a nuclear export complex with RanGTP, exportin and pre-miRNA.

It localises to the nucleus. GTP-binding protein involved in nucleocytoplasmic transport. Required for the import of protein into the nucleus and also for RNA export. Involved in chromatin condensation and control of cell cycle. This is GTP-binding nuclear protein Ran-2 (RAN2) from Oryza sativa subsp. indica (Rice).